The primary structure comprises 1187 residues: DNA-directed RNA polymerase subunit beta (1187 aa).

The interval 1150 to 1187 (KDEDDDPASSADDLGFNIGARPDAAAKEDQKAEEPEYQ) is disordered. The span at 1173 to 1187 (AAAKEDQKAEEPEYQ) shows a compositional bias: basic and acidic residues.

Belongs to the RNA polymerase beta chain family. As to quaternary structure, the RNAP catalytic core consists of 2 alpha, 1 beta, 1 beta' and 1 omega subunit. When a sigma factor is associated with the core the holoenzyme is formed, which can initiate transcription.

The enzyme catalyses RNA(n) + a ribonucleoside 5'-triphosphate = RNA(n+1) + diphosphate. DNA-dependent RNA polymerase catalyzes the transcription of DNA into RNA using the four ribonucleoside triphosphates as substrates. The chain is DNA-directed RNA polymerase subunit beta from Bifidobacterium longum subsp. infantis (strain ATCC 15697 / DSM 20088 / JCM 1222 / NCTC 11817 / S12).